We begin with the raw amino-acid sequence, 516 residues long: Histone H4 transcription factor (516 aa).

3 C2H2-type zinc fingers span residues 15–39, 127–151, and 167–191; these read LQCE…VTQH, FLCL…VEAH, and VLCG…LRSH. The C2H2-type 4; degenerate zinc finger occupies 197-219; it reads VACPTCGGMFANNTKFLDHIRRQ. 5 consecutive C2H2-type zinc fingers follow at residues 227 to 249, 253 to 276, 282 to 304, 310 to 335, and 343 to 366; these read FQCS…MRNH, YKCP…RFRH, FKCD…LDTH, YSCD…RKVH, and YRCH…RKKH. The interaction with NPAT stretch occupies residues 371-516; that stretch reads PSGHPRFRYK…AAEEPEVQMV (146 aa). The tract at residues 372–405 is required for activation of histone H4 transcription and contributes to DNA-binding; it reads SGHPRFRYKEHEDGYMRLQLVRYESVELTQQLLR. Disordered stretches follow at residues 429–456 and 486–516; these read TVPG…PASQ and PGEP…VQMV. Residues 436-445 show a composition bias toward acidic residues; the sequence is PQEEAEEEGG.

As to quaternary structure, binds MBD2 and a histone deacetylase complex. Interacts with NPAT. In terms of processing, ubiquitinated. Ubiquitination may lead to proteasome-mediated degradation.

It localises to the nucleus. Transcriptional repressor that binds to the consensus sequence 5'-CGGACGTT-3' and to the RB1 promoter. Transcriptional activator that promotes histone H4 gene transcription at the G1/S phase transition in conjunction with NPAT. Also activates transcription of the ATM and PRKDC genes. Autoregulates its expression by associating with its own promoter. The polypeptide is Histone H4 transcription factor (HINFP) (Bos taurus (Bovine)).